We begin with the raw amino-acid sequence, 115 residues long: SOSS complex subunit C homolog (115 aa).

This sequence belongs to the SOSS-C family.

The chain is SOSS complex subunit C homolog from Drosophila mojavensis (Fruit fly).